A 311-amino-acid chain; its full sequence is Formimidoylglutamase (311 aa).

Residues His130, Asp155, His157, Asp159, Cys242, and Asp244 each coordinate Mn(2+).

Belongs to the arginase family. Requires Mn(2+) as cofactor.

The catalysed reaction is N-formimidoyl-L-glutamate + H2O = formamide + L-glutamate. The protein operates within amino-acid degradation; L-histidine degradation into L-glutamate; L-glutamate from N-formimidoyl-L-glutamate (hydrolase route): step 1/1. Its function is as follows. Catalyzes the conversion of N-formimidoyl-L-glutamate to L-glutamate and formamide. The chain is Formimidoylglutamase from Staphylococcus aureus (strain MRSA252).